The chain runs to 375 residues: 23S rRNA (uracil(747)-C(5))-methyltransferase RlmC (375 aa).

4 residues coordinate [4Fe-4S] cluster: Cys-3, Cys-11, Cys-14, and Cys-87. S-adenosyl-L-methionine contacts are provided by Gln-212, Phe-241, Glu-262, and Asn-307. The Nucleophile role is filled by Cys-334.

This sequence belongs to the class I-like SAM-binding methyltransferase superfamily. RNA M5U methyltransferase family. RlmC subfamily.

It carries out the reaction uridine(747) in 23S rRNA + S-adenosyl-L-methionine = 5-methyluridine(747) in 23S rRNA + S-adenosyl-L-homocysteine + H(+). In terms of biological role, catalyzes the formation of 5-methyl-uridine at position 747 (m5U747) in 23S rRNA. The polypeptide is 23S rRNA (uracil(747)-C(5))-methyltransferase RlmC (Shigella boydii serotype 18 (strain CDC 3083-94 / BS512)).